The chain runs to 496 residues: Endoglucanase (496 aa).

A signal peptide spans Met1–Ala23. Asp93 serves as the catalytic Nucleophile. Catalysis depends on residues His415, Asp467, and Glu476.

It belongs to the glycosyl hydrolase 9 (cellulase E) family.

It catalyses the reaction Endohydrolysis of (1-&gt;4)-beta-D-glucosidic linkages in cellulose, lichenin and cereal beta-D-glucans.. Functionally, involved in ripening fruit process. In Phaseolus vulgaris (Kidney bean), this protein is Endoglucanase.